The primary structure comprises 560 residues: Membrane protein insertase YidC (560 aa).

A helical membrane pass occupies residues 1–21 (MDIKRTILIAALAIVSYVMVL). Residues 42–66 (VAPGLPDGVPAANNGASADVPSANA) are disordered. Transmembrane regions (helical) follow at residues 341–361 (LELT…FWLL), 367–387 (LLGN…GLFF), 437–457 (LGGC…YWVL), 468–488 (WMLW…PIIM), and 515–535 (PIIF…YWVV).

Belongs to the OXA1/ALB3/YidC family. Type 1 subfamily. As to quaternary structure, interacts with the Sec translocase complex via SecD. Specifically interacts with transmembrane segments of nascent integral membrane proteins during membrane integration.

It localises to the cell inner membrane. Functionally, required for the insertion and/or proper folding and/or complex formation of integral membrane proteins into the membrane. Involved in integration of membrane proteins that insert both dependently and independently of the Sec translocase complex, as well as at least some lipoproteins. Aids folding of multispanning membrane proteins. This chain is Membrane protein insertase YidC, found in Pseudomonas putida (strain W619).